The following is a 648-amino-acid chain: Calpain-5 (648 aa).

The region spanning 28-353 is the Calpain catalytic domain; the sequence is PFVDTLFPPT…FTDISLCQLF (326 aa). Residues C83, H252, and N290 contribute to the active site. The interval 354–509 is domain III; sequence NTSVFSFSRS…VYSDEHIHFS (156 aa). The 124-residue stretch at 502–625 folds into the C2 domain; the sequence is SDEHIHFSPL…ENRDTTLQLT (124 aa).

The protein belongs to the peptidase C2 family. Ca(2+) serves as cofactor. Expressed in neuronal, but not in GABA-ergic neurons, intestinal, hypodermal and excretory tissues.

Its function is as follows. Required for the correct female sexual development of the soma and germline in hermaphrodite animals, while being fully dispensable in males. Has calcium-dependent proteolytic activity and is involved in the cleavage of tra-2, for which it acts as a potentiator. Capable of calcium-dependent autolysis. Part of the necrosis cell death pathway. Required for necrosis of intestinal cells induced by B.thuringiensis endotoxin Cry6Aa. This chain is Calpain-5, found in Caenorhabditis elegans.